Consider the following 368-residue polypeptide: Ethanol acetyltransferase 1 (368 aa).

Residues 1-21 constitute a mitochondrion transit peptide; sequence MFLSLRPSLSVSRLAVVRRAY. Residues 67-171 enclose the AB hydrolase-1 domain; the sequence is PIIFFHGLLG…IIDNAPEPQP (105 aa). Residues Ser-140, Asp-164, and His-315 each act as charge relay system in the active site. The tract at residues 344–368 is disordered; sequence RNKDPNNYMQTQNSISNSDTMGQSL. Over residues 348 to 368 the composition is skewed to polar residues; the sequence is PNNYMQTQNSISNSDTMGQSL.

Belongs to the AB hydrolase superfamily.

The protein resides in the mitochondrion. It carries out the reaction ethanol + acetyl-CoA = ethyl acetate + CoA. The catalysed reaction is acetyl-CoA + H2O = acetate + CoA + H(+). It catalyses the reaction ethyl acetate + H2O = ethanol + acetate + H(+). Functionally, alcohol acetyltransferase that catalyzes the synthesis of ethyl acetate from ethanol and acetyl-CoA. Can also function as a thioesterase by hydrolyzing acetyl-CoA in the absence of ethanol, as well as esterase hydrolyzing ethyl acetate. This Kluyveromyces lactis (strain ATCC 8585 / CBS 2359 / DSM 70799 / NBRC 1267 / NRRL Y-1140 / WM37) (Yeast) protein is Ethanol acetyltransferase 1 (EAT1).